Reading from the N-terminus, the 417-residue chain is Phosphoglycerate kinase 2 (417 aa).

S2 bears the N-acetylserine mark. 2 positions are modified to phosphoserine: S2 and S4. K11 bears the N6-acetyllysine mark. (2R)-3-phosphoglycerate-binding residues include V23, D24, F25, N26, Q38, and R39. Residue K48 is modified to N6-acetyllysine. Positions 62, 63, 65, and 66 each coordinate (2R)-3-phosphoglycerate. An N6-acetyllysine mark is found at K75, K86, and K97. (2R)-3-phosphoglycerate-binding residues include L122 and R123. 2 positions are modified to N6-acetyllysine: K131 and K146. (2R)-3-phosphoglycerate-binding residues include H170 and R171. Y196 is subject to Phosphotyrosine. The residue at position 199 (K199) is an N6-acetyllysine. G214 provides a ligand contact to ADP. G214 provides a ligand contact to CDP. The AMP site is built by A215 and K216. An ATP-binding site is contributed by A215. A215 serves as a coordination point for Mg(2+). A218 and D219 together coordinate Mg(2+). D219 provides a ligand contact to CDP. K220 is a binding site for AMP. K220 lines the ATP pocket. G238 serves as a coordination point for ADP. G238 serves as a coordination point for CDP. G239 is a binding site for AMP. G239 is a binding site for ATP. Residues K267 and K291 each carry the N6-acetyllysine modification. Residue G313 coordinates AMP. G313 is an ATP binding site. Residues G338 and F343 each coordinate CDP. ADP is bound at residue F343. An AMP-binding site is contributed by E344. Residues E344, D375, and T376 each coordinate ATP. Position 375 (D375) interacts with Mg(2+).

It belongs to the phosphoglycerate kinase family. In terms of assembly, monomer. Mg(2+) is required as a cofactor. As to expression, mainly found in round spermatids. Localized on the principle piece in the sperm (at protein level). Testis-specific. Expression significantly decreased in the testis of elderly men.

The protein resides in the cytoplasm. It catalyses the reaction (2R)-3-phosphoglycerate + ATP = (2R)-3-phospho-glyceroyl phosphate + ADP. It functions in the pathway carbohydrate degradation; glycolysis; pyruvate from D-glyceraldehyde 3-phosphate: step 2/5. Functionally, essential for sperm motility and male fertility. Not required for the completion of spermatogenesis. The polypeptide is Phosphoglycerate kinase 2 (PGK2) (Homo sapiens (Human)).